Consider the following 874-residue polypeptide: Alanine--tRNA ligase (874 aa).

4 residues coordinate Zn(2+): H564, H568, C665, and H669.

It belongs to the class-II aminoacyl-tRNA synthetase family. Requires Zn(2+) as cofactor.

The protein resides in the cytoplasm. It catalyses the reaction tRNA(Ala) + L-alanine + ATP = L-alanyl-tRNA(Ala) + AMP + diphosphate. Its function is as follows. Catalyzes the attachment of alanine to tRNA(Ala) in a two-step reaction: alanine is first activated by ATP to form Ala-AMP and then transferred to the acceptor end of tRNA(Ala). Also edits incorrectly charged Ser-tRNA(Ala) and Gly-tRNA(Ala) via its editing domain. This is Alanine--tRNA ligase from Burkholderia mallei (strain ATCC 23344).